The chain runs to 142 residues: Glia maturation factor gamma (142 aa).

Ser-2 is modified (N-acetylserine). Positions 4 to 139 constitute an ADF-H domain; that stretch reads SLVVCEVDPE…TETWLKEKLA (136 aa).

It belongs to the actin-binding proteins ADF family. GMF subfamily.

The chain is Glia maturation factor gamma (Gmfg) from Mus musculus (Mouse).